A 267-amino-acid chain; its full sequence is Undecaprenyl-diphosphatase (267 aa).

7 consecutive transmembrane segments (helical) span residues proline 39–phenylalanine 59, valine 87–leucine 107, phenylalanine 112–valine 132, valine 145–valine 165, proline 183–valine 203, leucine 216–leucine 236, and serine 244–alanine 264.

Belongs to the UppP family.

It is found in the cell inner membrane. The catalysed reaction is di-trans,octa-cis-undecaprenyl diphosphate + H2O = di-trans,octa-cis-undecaprenyl phosphate + phosphate + H(+). In terms of biological role, catalyzes the dephosphorylation of undecaprenyl diphosphate (UPP). Confers resistance to bacitracin. In Gemmatimonas aurantiaca (strain DSM 14586 / JCM 11422 / NBRC 100505 / T-27), this protein is Undecaprenyl-diphosphatase.